Here is a 397-residue protein sequence, read N- to C-terminus: Elongation factor Tu (397 aa).

Residues 10 to 207 enclose the tr-type G domain; the sequence is KPHVNVGTIG…TLDSYIPEPV (198 aa). A G1 region spans residues 19-26; the sequence is GHVDHGKT. 19 to 26 is a GTP binding site; sequence GHVDHGKT. Thr26 serves as a coordination point for Mg(2+). The segment at 60–64 is G2; the sequence is GITIN. Phosphotyrosine is present on Tyr77. Residues 81–84 are G3; the sequence is DCPG. A GTP-binding site is contributed by 81–85; sequence DCPGH. Tyr88 carries the post-translational modification Phosphotyrosine. 136–139 serves as a coordination point for GTP; the sequence is NKAD. The interval 136-139 is G4; sequence NKAD. Residues 174-176 are G5; the sequence is SAL.

This sequence belongs to the TRAFAC class translation factor GTPase superfamily. Classic translation factor GTPase family. EF-Tu/EF-1A subfamily. In terms of assembly, monomer.

The protein localises to the cytoplasm. The enzyme catalyses GTP + H2O = GDP + phosphate + H(+). GTP hydrolase that promotes the GTP-dependent binding of aminoacyl-tRNA to the A-site of ribosomes during protein biosynthesis. This Pseudomonas aeruginosa (strain UCBPP-PA14) protein is Elongation factor Tu.